The primary structure comprises 526 residues: MFRHAFSKSSPAFLAGGSAIGGAIAGLMWSGERNTSSSTACDSSEPSNQSVIGLLQELSRKVNNLESLVGGNPGSFPARSTSSVTKSGTQYGIDIVLGAQWGDEGKGKLVDLLSQDYDVCARVAGGSNAGHTIVVQGKKYKFHLLPSGVLNPNATCVIGNGVVIHIPSFLNELDSLEASGVDYQGRVYISDRAHLVFDFHQEVDGRQEDRLGRHKIGTTKKGIGPAYSSKINRNGLRVGDLQNWDHFERRFRELCTHHERSYEGLKIDVDNQLAFYKTVAERVNSMTIDTIDYTNKQFEAGKRILVEGANATMLDIDFGTYPYVTSSNPSVGSVLTGLGVSPGKLRGIYGTVKAYCTRVGEGPFPTELPLDEGTPGEHLSQVGAEYGTTTGRTRRCGWLDIPQMKYSALINGFTSINLTKVDVFTGMPEVKIGKAYLHNGKYLSSMPASLDVLSNVGVEYEVLPGWSEDISNCKKFEELPENCQKYILRVQELLGIPIRWIGVGPNRADVIDRGEGWDLATAGTNQ.

Residues 102-108 and 130-132 each bind GTP; these read GDEGKGK and GHT. Asp-103 serves as the catalytic Proton acceptor. Residues Asp-103 and Gly-130 each coordinate Mg(2+). IMP contacts are provided by residues 103-106, 128-131, Thr-219, Arg-233, Asn-310, Thr-325, and Arg-392; these read DEGK and NAGH. His-131 serves as the catalytic Proton donor. 388-394 contacts substrate; sequence TTTGRTR. Residues Arg-394, 420–422, and 502–504 contribute to the GTP site; these read KVD and GVG.

The protein belongs to the adenylosuccinate synthetase family. Homodimer. Mg(2+) is required as a cofactor.

It is found in the cytoplasm. It carries out the reaction IMP + L-aspartate + GTP = N(6)-(1,2-dicarboxyethyl)-AMP + GDP + phosphate + 2 H(+). The protein operates within purine metabolism; AMP biosynthesis via de novo pathway; AMP from IMP: step 1/2. Its function is as follows. Plays an important role in the de novo pathway and in the salvage pathway of purine nucleotide biosynthesis. Catalyzes the first committed step in the biosynthesis of AMP from IMP. This is Adenylosuccinate synthetase from Phaeodactylum tricornutum (strain CCAP 1055/1).